Here is a 352-residue protein sequence, read N- to C-terminus: Dolichol-phosphate mannosyltransferase (352 aa).

Topologically, residues 1–229 are cytoplasmic; it reads MKVSVIIPTY…HIYRLMKWEG (229 aa). GDP-alpha-D-mannose is bound by residues proline 8, tyrosine 10, glutamate 12, valine 37, aspartate 39, aspartate 89, alanine 90, aspartate 91, glutamine 93, arginine 117, valine 156, lysine 178, arginine 202, and lysine 208. Mg(2+) is bound by residues aspartate 91 and glutamine 93. Residues aspartate 91 and glutamine 93 each coordinate Mn(2+). The helical transmembrane segment at 230-256 threads the bilayer; sequence EIDRIVKFSIVGLSGILVNEGFLWLFV. The Extracellular segment spans residues 257 to 261; that stretch reads NLGIP. A helical membrane pass occupies residues 262-286; sequence KEIAVIPAVELSILNNFFWNDIWTF. At 287–293 the chain is on the cytoplasmic side; it reads KDIRRGS. Residues 294–320 form a helical membrane-spanning segment; it reads IFSRLLKFHIAALSGAVVNFIVYWILL. At 321–325 the chain is on the extracellular side; it reads FLGIH. The helical transmembrane segment at 326–350 threads the bilayer; it reads YLIANLVGIVLSFGVRYVINRHVTW. Over 351–352 the chain is Cytoplasmic; the sequence is AT.

The protein belongs to the glycosyltransferase 2 family. The cofactor is Mg(2+). Mn(2+) serves as cofactor. Ca(2+) is required as a cofactor.

The protein localises to the cell membrane. It carries out the reaction a di-trans,poly-cis-dolichyl phosphate + GDP-alpha-D-mannose = a di-trans,poly-cis-dolichyl beta-D-mannosyl phosphate + GDP. The protein operates within protein modification; protein glycosylation. Functionally, transfers mannose from GDP-mannose to dolichol monophosphate to form dolichol phosphate mannose (Dol-P-Man) which is the mannosyl donor in pathways leading to N-glycosylation, glycosyl phosphatidylinositol membrane anchoring, and O-mannosylation of proteins. This Pyrococcus furiosus (strain ATCC 43587 / DSM 3638 / JCM 8422 / Vc1) protein is Dolichol-phosphate mannosyltransferase.